The primary structure comprises 245 residues: Lactate utilization protein A (245 aa).

It belongs to the LutA/YkgE family.

Is involved in L-lactate degradation and allows cells to grow with lactate as the sole carbon source. The sequence is that of Lactate utilization protein A from Exiguobacterium sp. (strain ATCC BAA-1283 / AT1b).